We begin with the raw amino-acid sequence, 168 residues long: Putative B3 domain-containing protein Os10g0158600 (168 aa).

A DNA-binding region (TF-B3) is located at residues 4–97 (VVFASARLNA…KARVMLLNRQ (94 aa)). The disordered stretch occupies residues 105-151 (KTPSTTSSDKNRSLSPSDQLTRASTSAHPSTSKSIPPLRNGTGSTKR). Over residues 106–138 (TPSTTSSDKNRSLSPSDQLTRASTSAHPSTSKS) the composition is skewed to polar residues.

It localises to the nucleus. The polypeptide is Putative B3 domain-containing protein Os10g0158600 (Oryza sativa subsp. japonica (Rice)).